The sequence spans 139 residues: Small ribosomal subunit protein uS12 (139 aa).

The residue at position 102 (Asp-102) is a 3-methylthioaspartic acid. The interval 116–139 (DTTGVAKRSQGRSKYGAKRPKKSK) is disordered. The span at 124–139 (SQGRSKYGAKRPKKSK) shows a compositional bias: basic residues.

Belongs to the universal ribosomal protein uS12 family. In terms of assembly, part of the 30S ribosomal subunit. Contacts proteins S8 and S17. May interact with IF1 in the 30S initiation complex.

Its function is as follows. With S4 and S5 plays an important role in translational accuracy. Functionally, interacts with and stabilizes bases of the 16S rRNA that are involved in tRNA selection in the A site and with the mRNA backbone. Located at the interface of the 30S and 50S subunits, it traverses the body of the 30S subunit contacting proteins on the other side and probably holding the rRNA structure together. The combined cluster of proteins S8, S12 and S17 appears to hold together the shoulder and platform of the 30S subunit. The protein is Small ribosomal subunit protein uS12 of Mesomycoplasma hyopneumoniae (strain 7448) (Mycoplasma hyopneumoniae).